A 1242-amino-acid polypeptide reads, in one-letter code: DNA excision repair protein ERCC-6-like (1242 aa).

Serine 14 carries the phosphoserine modification. The TPR 1 repeat unit spans residues 21 to 54; sequence YLRYVKEAKEATKNGDLEQALKLFNLAKDIFPNE. A Helicase ATP-binding domain is found at 109-277; it reads SLYRDGRRGG…WSLFDFACQG (169 aa). 122–129 contributes to the ATP binding site; the sequence is DDMGLGKT. The DEAH box motif lies at 228–231; sequence DEAH. One can recognise a Helicase C-terminal domain in the interval 466–626; the sequence is FLMDLLKKLR…PFRYFSKQEL (161 aa). Residues serine 755 and serine 773 each carry the phosphoserine modification. A Phosphothreonine modification is found at threonine 815. Residues serine 963, serine 989, serine 998, and serine 1021 each carry the phosphoserine modification. At threonine 1055 the chain carries Phosphothreonine. Residues serine 1061, serine 1090, and serine 1110 each carry the phosphoserine modification. A disordered region spans residues 1103–1181; it reads EERLDNSSEA…LSDGQLVDSP (79 aa). Composition is skewed to basic and acidic residues over residues 1105-1121 and 1130-1140; these read RLDN…HLEE and APEHTKEDPSR. Positions 1141–1156 are enriched in polar residues; it reads ETLSSENKSSQLSTSK. Residues serine 1173 and serine 1180 each carry the phosphoserine modification. The stretch at 1192–1225 is one TPR 2 repeat; it reads YDTLVLHGKELKECGKIQEALDCLVKALDIKSSD.

It belongs to the SNF2/RAD54 helicase family. As to quaternary structure, interacts with PLK1, which phosphorylates it. Both proteins are mutually dependent on each other for correct subcellular localization. Interacts (via N-terminal TPR repeat) with BEND3 (via BEN domains 1 and 3); the interaction is direct. In terms of processing, phosphorylation by PLK1 prevents the association with chromosome arms and restricts its localization to the kinetochore-centromere region.

Its subcellular location is the chromosome. The protein resides in the centromere. The protein localises to the kinetochore. The catalysed reaction is ATP + H2O = ADP + phosphate + H(+). DNA helicase that acts as a tension sensor that associates with catenated DNA which is stretched under tension until it is resolved during anaphase. Functions as ATP-dependent DNA translocase. Can promote Holliday junction branch migration (in vitro). In Bos taurus (Bovine), this protein is DNA excision repair protein ERCC-6-like (ERCC6L).